The sequence spans 232 residues: Ribose-5-phosphate isomerase A (232 aa).

Residues 29 to 32, 84 to 87, and 97 to 100 each bind substrate; these read TGST, DGAD, and KGGG. Glutamate 106 functions as the Proton acceptor in the catalytic mechanism. Residue lysine 124 coordinates substrate.

The protein belongs to the ribose 5-phosphate isomerase family. Homodimer.

It carries out the reaction aldehydo-D-ribose 5-phosphate = D-ribulose 5-phosphate. It functions in the pathway carbohydrate degradation; pentose phosphate pathway; D-ribose 5-phosphate from D-ribulose 5-phosphate (non-oxidative stage): step 1/1. Functionally, catalyzes the reversible conversion of ribose-5-phosphate to ribulose 5-phosphate. In Brucella suis biovar 1 (strain 1330), this protein is Ribose-5-phosphate isomerase A.